A 268-amino-acid chain; its full sequence is Ribosomal RNA small subunit methyltransferase A (268 aa).

6 residues coordinate S-adenosyl-L-methionine: Asn23, Ile25, Gly50, Glu72, Asp97, and Asn116.

This sequence belongs to the class I-like SAM-binding methyltransferase superfamily. rRNA adenine N(6)-methyltransferase family. RsmA subfamily.

The protein localises to the cytoplasm. It catalyses the reaction adenosine(1518)/adenosine(1519) in 16S rRNA + 4 S-adenosyl-L-methionine = N(6)-dimethyladenosine(1518)/N(6)-dimethyladenosine(1519) in 16S rRNA + 4 S-adenosyl-L-homocysteine + 4 H(+). Its function is as follows. Specifically dimethylates two adjacent adenosines (A1518 and A1519) in the loop of a conserved hairpin near the 3'-end of 16S rRNA in the 30S particle. May play a critical role in biogenesis of 30S subunits. This is Ribosomal RNA small subunit methyltransferase A from Rickettsia prowazekii (strain Madrid E).